A 328-amino-acid polypeptide reads, in one-letter code: GTP 3',8-cyclase (328 aa).

Positions 9–229 (GFGRDVRYLR…DNGLNTGGPA (221 aa)) constitute a Radical SAM core domain. R18 lines the GTP pocket. Residues C25 and C29 each coordinate [4Fe-4S] cluster. Y31 contributes to the S-adenosyl-L-methionine binding site. Residue C32 coordinates [4Fe-4S] cluster. R60 contacts GTP. Residue G64 participates in S-adenosyl-L-methionine binding. T94 contributes to the GTP binding site. S118 contacts S-adenosyl-L-methionine. GTP is bound at residue K154. M188 provides a ligand contact to S-adenosyl-L-methionine. Residues C252 and C255 each contribute to the [4Fe-4S] cluster site. 257–259 (RVR) is a binding site for GTP. C269 is a binding site for [4Fe-4S] cluster.

The protein belongs to the radical SAM superfamily. MoaA family. Monomer and homodimer. The cofactor is [4Fe-4S] cluster.

The enzyme catalyses GTP + AH2 + S-adenosyl-L-methionine = (8S)-3',8-cyclo-7,8-dihydroguanosine 5'-triphosphate + 5'-deoxyadenosine + L-methionine + A + H(+). It functions in the pathway cofactor biosynthesis; molybdopterin biosynthesis. Its function is as follows. Catalyzes the cyclization of GTP to (8S)-3',8-cyclo-7,8-dihydroguanosine 5'-triphosphate. The chain is GTP 3',8-cyclase from Rhodobacter capsulatus (Rhodopseudomonas capsulata).